Consider the following 548-residue polypeptide: Chaperonin GroEL (548 aa).

ATP contacts are provided by residues 30 to 33 (TLGP), Lys-51, 87 to 91 (DGTTT), Gly-415, 479 to 481 (NAA), and Asp-495. Residues 525 to 548 (PKEDKTSDASSSPAGGMGGMGGMM) are disordered. Positions 539 to 548 (GGMGGMGGMM) are enriched in gly residues.

The protein belongs to the chaperonin (HSP60) family. Forms a cylinder of 14 subunits composed of two heptameric rings stacked back-to-back. Interacts with the co-chaperonin GroES.

The protein resides in the cytoplasm. The catalysed reaction is ATP + H2O + a folded polypeptide = ADP + phosphate + an unfolded polypeptide.. Together with its co-chaperonin GroES, plays an essential role in assisting protein folding. The GroEL-GroES system forms a nano-cage that allows encapsulation of the non-native substrate proteins and provides a physical environment optimized to promote and accelerate protein folding. The polypeptide is Chaperonin GroEL (Buchnera aphidicola subsp. Rhopalosiphum maidis).